The chain runs to 130 residues: Small ribosomal subunit protein uS8 (130 aa).

Belongs to the universal ribosomal protein uS8 family. In terms of assembly, part of the 30S ribosomal subunit. Contacts proteins S5 and S12.

Its function is as follows. One of the primary rRNA binding proteins, it binds directly to 16S rRNA central domain where it helps coordinate assembly of the platform of the 30S subunit. The sequence is that of Small ribosomal subunit protein uS8 from Proteus mirabilis (strain HI4320).